The primary structure comprises 198 residues: Putative pseudouridine methyltransferase (198 aa).

2 residues coordinate S-adenosyl-L-methionine: Leu132 and Cys186.

It belongs to the methyltransferase superfamily. TrmY family.

It is found in the cytoplasm. This is Putative pseudouridine methyltransferase from Vibrio vulnificus (strain CMCP6).